The sequence spans 692 residues: Junctophilin-2 (692 aa).

Residues 1 to 670 lie on the Cytoplasmic side of the membrane; that stretch reads MSGGRFDFDD…EVEVEEVPNT (670 aa). 6 MORN repeats span residues 14-36, 38-59, 60-79, 82-104, 106-128, and 129-151; these read YCGGWEGGKAHGHGLCTGPKGQG, YSGSWNFGFEVAGVYTWPSGNT, FEGYWSQGKRHGLGIETKGR, YKGEWTHGFKGRYGIRQSTNSGA, YEGTWNNGLQDGYGTETYADGGT, and YQGQFTNGMRHGYGVRQSVPYGM. Ser-162 and Ser-165 each carry phosphoserine. Disordered regions lie at residues 164-190 and 246-273; these read SSLRSEHSNGTVAPDSPAADGPTLPLP and LSSGASDAASTGSLAEGAEGPDDAAAPF. MORN repeat units lie at residues 285–307 and 308–330; these read YMGEWKNDKRSGFGVSERSSGLR and YEGEWLDNLRHGYGRTTLPDGHR. The short motif at 345–359 is the Bipartite nuclear localization signal element; the sequence is KRRVLPLKSNKVRQK. The tract at residues 439–661 is disordered; the sequence is NSESLLEPRE…KEVAQEAEAE (223 aa). Phosphoserine occurs at positions 440, 442, and 462. Residues 457-471 show a composition bias toward basic and acidic residues; it reads ERPRESPQLHERETP. Thr-470 is subject to Phosphothreonine. Positions 474-487 are enriched in pro residues; that stretch reads EGGPPSPAGTPPQP. Phosphoserine is present on Ser-479. Thr-483 bears the Phosphothreonine mark. Positions 488–492 match the Nuclear localization signal motif; sequence KRPRP. Phosphoserine occurs at positions 527 and 533. Residues 573–582 show a composition bias toward acidic residues; it reads PLEDEPEPEP. Residues Ser-589, Ser-593, Ser-604, and Ser-609 each carry the phosphoserine modification. Over residues 627-640 the composition is skewed to basic and acidic residues; it reads AEPKAKARKTEARG. The helical; Anchor for type IV membrane protein transmembrane segment at 671–691 threads the bilayer; sequence VLICMVILLNIGLAILFVHLL.

The protein belongs to the junctophilin family. In terms of assembly, interacts with TRPC3. Interacts with BAG5 and HSPA8; the interaction with HSPA8 is increased in the presence of BAG5. Junctophilin-2 N-terminal fragment: Interacts with MEF2C. Proteolytically cleaved by calpain in response to cardiac stress. The major cleavage site takes place at the C-terminus and leads to the release of the Junctophilin-2 N-terminal fragment chain (JP2NT). Post-translationally, phosphorylation on Ser-165, probably by PKC, affects RYR1-mediated calcium ion release, interaction with TRPC3, and skeletal muscle myotubule development.

Its subcellular location is the cell membrane. It localises to the sarcoplasmic reticulum membrane. The protein resides in the endoplasmic reticulum membrane. It is found in the nucleus. Functionally, membrane-binding protein that provides a structural bridge between the plasma membrane and the sarcoplasmic reticulum and is required for normal excitation-contraction coupling in cardiomyocytes. Provides a structural foundation for functional cross-talk between the cell surface and intracellular Ca(2+) release channels by maintaining the 12-15 nm gap between the sarcolemma and the sarcoplasmic reticulum membranes in the cardiac dyads. Necessary for proper intracellular Ca(2+) signaling in cardiac myocytes via its involvement in ryanodine receptor-mediated calcium ion release. Contributes to the construction of skeletal muscle triad junctions. In terms of biological role, transcription repressor required to safeguard against the deleterious effects of cardiac stress. Generated following cleavage of the Junctophilin-2 chain by calpain in response to cardiac stress in cardiomyocytes. Following cleavage and release from the membrane, translocates to the nucleus, binds DNA and represses expression of genes implicated in cell growth and differentiation, hypertrophy, inflammation and fibrosis. Modifies the transcription profile and thereby attenuates pathological remodeling in response to cardiac stress. Probably acts by competing with MEF2 transcription factors and TATA-binding proteins. This is Junctophilin-2 from Rattus norvegicus (Rat).